The sequence spans 377 residues: 4-hydroxy-3-methylbut-2-en-1-yl diphosphate synthase (flavodoxin) (377 aa).

[4Fe-4S] cluster contacts are provided by C275, C278, C310, and E317.

Belongs to the IspG family. The cofactor is [4Fe-4S] cluster.

The enzyme catalyses (2E)-4-hydroxy-3-methylbut-2-enyl diphosphate + oxidized [flavodoxin] + H2O + 2 H(+) = 2-C-methyl-D-erythritol 2,4-cyclic diphosphate + reduced [flavodoxin]. Its pathway is isoprenoid biosynthesis; isopentenyl diphosphate biosynthesis via DXP pathway; isopentenyl diphosphate from 1-deoxy-D-xylulose 5-phosphate: step 5/6. Functionally, converts 2C-methyl-D-erythritol 2,4-cyclodiphosphate (ME-2,4cPP) into 1-hydroxy-2-methyl-2-(E)-butenyl 4-diphosphate. In Ruegeria sp. (strain TM1040) (Silicibacter sp.), this protein is 4-hydroxy-3-methylbut-2-en-1-yl diphosphate synthase (flavodoxin).